We begin with the raw amino-acid sequence, 485 residues long: MNEVMVIKEGWLQKRGEYIKTWRPRYFLLKSDGSFIGYKEKPDSTEHSLLPPLNNFSVAECQLMKTERPRPNTFVIRCLQWTTVIERTFHVDTPEEREEWIIAIQTVANGLKNQVPEDEEEEAMEVKYGSPSDVSSAEQMDVAMSKGRPKVTMNDFDYLKLLGKGTFGKVILVREKATGLYYAMKILRKEVIIAKDEVAHTLTESRVLQNTKHPFLTGLKYAFQTSDRLCFVMEYANGGELFFHLSRERVFTEDRARFYGAEIVSALEYLHSRNVVYRDIKLENLMLDKDGHVKITDFGLCKEGITDGATMRTFCGTPEYLAPEVLEDNDYGRAVDWWGLGVVMYEMMCGRLPFYNQDHERLFELILMEETRFPRTLSPEAKSLLAGLLKKDPKQRLGGGPDDAQEVMSHGFFASINWQDVTERKLSPPFKPQVTSEIDTRYFDDEFTAQSITLTPPDRYDNLDALESEQRPHFPQFSYSSSIRE.

Positions 5–109 (MVIKEGWLQK…WIIAIQTVAN (105 aa)) constitute a PH domain. O-linked (GlcNAc) serine glycans are attached at residues Ser132 and Ser135. Residues 156–413 (FDYLKLLGKG…AQEVMSHGFF (258 aa)) form the Protein kinase domain. ATP is bound by residues 162–170 (LGKGTFGKV) and Lys185. Asp279 functions as the Proton acceptor in the catalytic mechanism. O-linked (GlcNAc) threonine glycosylation is present at Thr310. Thr313 bears the Phosphothreonine mark. Thr317 carries O-linked (GlcNAc) threonine glycosylation. Residues 414–485 (ASINWQDVTE…QFSYSSSIRE (72 aa)) form the AGC-kinase C-terminal domain. The tract at residues 454–485 (LTPPDRYDNLDALESEQRPHFPQFSYSSSIRE) is disordered. The span at 458–472 (DRYDNLDALESEQRP) shows a compositional bias: basic and acidic residues. Residue Ser478 is modified to Phosphoserine. The O-linked (GlcNAc) serine; alternate glycan is linked to Ser478.

The protein belongs to the protein kinase superfamily. AGC Ser/Thr protein kinase family. RAC subfamily. In terms of processing, phosphorylation on Thr-313 and Ser-478 is required for full activity. Phosphorylation of the activation loop at Thr-313 by PDPK1/PDK1 is a prerequisite for full activation. Phosphorylation by mTORC2 at Ser-478 in response to growth factors plays a key role in AKT1 activation by facilitating subsequent phosphorylation of the activation loop by PDPK1/PDK1.

The catalysed reaction is L-seryl-[protein] + ATP = O-phospho-L-seryl-[protein] + ADP + H(+). The enzyme catalyses L-threonyl-[protein] + ATP = O-phospho-L-threonyl-[protein] + ADP + H(+). With respect to regulation, two specific sites, one in the kinase domain (Thr-313) and the other in the C-terminal regulatory region (Ser-478), need to be phosphorylated for its full activation. Functionally, akt2-b is one of several closely related serine/threonine-protein kinases known as the AKT kinase, and which regulate many processes including metabolism, proliferation, cell survival, growth and angiogenesis. This is mediated through serine and/or threonine phosphorylation of a range of downstream substrates. Over 100 substrate candidates have been reported so far, but for most of them, no isoform specificity has been reported. May be involved in the inhibition of ciliogenesis. In Xenopus laevis (African clawed frog), this protein is RAC-beta serine/threonine-protein kinase B (akt2-b).